A 353-amino-acid chain; its full sequence is MMSTLSYTLGQLAAHVGAEVRGDADLPIQGLATLQEAGPAQLSFLANPQYRKYLPESRAGAVLLTAADADGFAGTALVVANPYLAYASLSHLFDRKPKAAAGIHPTAIVAADAEVDPSASVGAYAVIESGARIGAGVSIGAHCVIGARSVIGEGGWLAPRVTLYHDVTIGARVSIQSGAVIGGEGFGFANEKGVWQKIAQIGGVTIGDDVEIGANTTIDRGALSDTLIGNGVKLDNQIMIAHNVQIGDHTAMAACVGISGSAKIGRHCMLAGGVGLVGHIEICDNVFVTGMTMVTRSITEPGSYSSGTAMQPAAEWKKSAARIRQLDDMARRLQQLEKRLAAVTSSGDASSDA.

H242 acts as the Proton acceptor in catalysis.

This sequence belongs to the transferase hexapeptide repeat family. LpxD subfamily. As to quaternary structure, homotrimer.

The enzyme catalyses a UDP-3-O-[(3R)-3-hydroxyacyl]-alpha-D-glucosamine + a (3R)-hydroxyacyl-[ACP] = a UDP-2-N,3-O-bis[(3R)-3-hydroxyacyl]-alpha-D-glucosamine + holo-[ACP] + H(+). The protein operates within bacterial outer membrane biogenesis; LPS lipid A biosynthesis. Its function is as follows. Catalyzes the N-acylation of UDP-3-O-acylglucosamine using 3-hydroxyacyl-ACP as the acyl donor. Is involved in the biosynthesis of lipid A, a phosphorylated glycolipid that anchors the lipopolysaccharide to the outer membrane of the cell. The polypeptide is UDP-3-O-acylglucosamine N-acyltransferase (Pseudomonas aeruginosa (strain LESB58)).